The primary structure comprises 146 residues: Acidic phospholipase A2 2 (146 aa).

A signal peptide spans 1 to 21; the sequence is MTPAHLLILAAVCVSPLGASS. A propeptide spanning residues 22–27 is cleaved from the precursor; the sequence is SRPMPL. 7 cysteine pairs are disulfide-bonded: Cys38–Cys98, Cys53–Cys145, Cys55–Cys71, Cys70–Cys126, Cys77–Cys119, Cys87–Cys112, and Cys105–Cys117. Residues Tyr54, Gly56, and Gly58 each contribute to the Ca(2+) site. The active site involves His74. Residue Asp75 participates in Ca(2+) binding. The active site involves Asp120.

The protein belongs to the phospholipase A2 family. Group I subfamily. D49 sub-subfamily. Requires Ca(2+) as cofactor. As to expression, expressed by the venom gland.

The protein resides in the secreted. The enzyme catalyses a 1,2-diacyl-sn-glycero-3-phosphocholine + H2O = a 1-acyl-sn-glycero-3-phosphocholine + a fatty acid + H(+). PLA2 catalyzes the calcium-dependent hydrolysis of the 2-acyl groups in 3-sn-phosphoglycerides. This chain is Acidic phospholipase A2 2, found in Naja atra (Chinese cobra).